The sequence spans 489 residues: Dipeptide and tripeptide permease B (489 aa).

The Cytoplasmic portion of the chain corresponds to Met-1–Arg-27. The chain crosses the membrane as a helical span at residues Phe-28 to Ser-48. At Gln-49–Ala-52 the chain is on the periplasmic side. Residues Phe-53–Val-73 traverse the membrane as a helical segment. Residues Gly-74 to Arg-82 lie on the Cytoplasmic side of the membrane. The helical transmembrane segment at Thr-83 to Leu-103 threads the bilayer. Residues Lys-104–Glu-106 lie on the Periplasmic side of the membrane. A helical transmembrane segment spans residues Leu-107–Ala-127. The Cytoplasmic portion of the chain corresponds to Ser-128 to Thr-146. A helical transmembrane segment spans residues Leu-147 to Ala-167. Over Glu-168–Gly-171 the chain is Periplasmic. Residues Tyr-172–Leu-192 traverse the membrane as a helical segment. Topologically, residues Tyr-193 to Lys-212 are cytoplasmic. Transmembrane regions (helical) follow at residues Asn-213–His-233 and Asn-234–Phe-254. Over Arg-255–Lys-267 the chain is Cytoplasmic. The helical transmembrane segment at Met-268 to Met-288 threads the bilayer. The Periplasmic segment spans residues Pro-289–Pro-311. The helical transmembrane segment at Val-312–Leu-332 threads the bilayer. The Cytoplasmic portion of the chain corresponds to Tyr-333–Thr-350. Residues Val-351 to Ala-371 traverse the membrane as a helical segment. The Periplasmic segment spans residues Asp-372 to Gly-375. A helical membrane pass occupies residues Leu-376–Ile-396. The Cytoplasmic portion of the chain corresponds to Ser-397 to Met-419. A helical transmembrane segment spans residues Trp-420 to Ile-440. Residues Pro-441 to Asn-456 lie on the Periplasmic side of the membrane. A helical membrane pass occupies residues Val-457 to Pro-477. Residues Leu-478–Ala-489 lie on the Cytoplasmic side of the membrane.

It belongs to the major facilitator superfamily. Proton-dependent oligopeptide transporter (POT/PTR) (TC 2.A.17) family. DtpB subfamily.

The protein localises to the cell inner membrane. Its function is as follows. Proton-dependent permease that transports di- and tripeptides. The chain is Dipeptide and tripeptide permease B from Photorhabdus asymbiotica subsp. asymbiotica (strain ATCC 43949 / 3105-77) (Xenorhabdus luminescens (strain 2)).